The chain runs to 530 residues: uncharacterized protein (530 aa).

Residues 485–529 adopt a coiled-coil conformation; the sequence is SKEENREIKLSIRENKEKQRKKSVEKSVSKLQNQLNRLLNKNTIE.

This is an uncharacterized protein from Acanthamoeba polyphaga (Amoeba).